A 394-amino-acid chain; its full sequence is Elongation factor Tu 2 (394 aa).

Residues 10–204 enclose the tr-type G domain; it reads KPHVNVGTIG…ALDTYIPEPE (195 aa). Positions 19 to 26 are G1; sequence GHVDHGKT. A GTP-binding site is contributed by 19 to 26; the sequence is GHVDHGKT. T26 contributes to the Mg(2+) binding site. A G2 region spans residues 60-64; it reads GITIS. Residues 81–84 are G3; the sequence is DCPG. Residues 81–85 and 136–139 each bind GTP; these read DCPGH and NKCD. A G4 region spans residues 136–139; the sequence is NKCD. The tract at residues 174–176 is G5; that stretch reads SAL.

It belongs to the TRAFAC class translation factor GTPase superfamily. Classic translation factor GTPase family. EF-Tu/EF-1A subfamily. Monomer.

The protein localises to the cytoplasm. The enzyme catalyses GTP + H2O = GDP + phosphate + H(+). GTP hydrolase that promotes the GTP-dependent binding of aminoacyl-tRNA to the A-site of ribosomes during protein biosynthesis. The chain is Elongation factor Tu 2 from Vibrio vulnificus (strain CMCP6).